Here is a 1102-residue protein sequence, read N- to C-terminus: Protein MMS22-like (1102 aa).

This sequence belongs to the MMS22 family. MMS22L subfamily.

It is found in the nucleus. The protein localises to the chromosome. In terms of biological role, involved in recombination-dependent repair of stalled or collapsed replication forks. The chain is Protein MMS22-like from Drosophila melanogaster (Fruit fly).